We begin with the raw amino-acid sequence, 135 residues long: Congerin-1 (135 aa).

Serine 1 carries the N-acetylserine modification. One can recognise a Galectin domain in the interval 3–135 (GLQVKNFDFT…GDARLTLVKE (133 aa)). 70–76 (WETEQRS) contributes to the a beta-D-galactoside binding site.

Homodimer.

Functionally, this protein binds beta-galactoside. Its physiological function is not yet known. The sequence is that of Congerin-1 from Conger myriaster (Conger eel).